A 342-amino-acid chain; its full sequence is Spore photoproduct lyase (342 aa).

The region spanning 77-305 (SKPSAEYAIP…EEKRRYKWGR (229 aa)) is the Radical SAM core domain. Cysteine 91, cysteine 95, and cysteine 98 together coordinate [4Fe-4S] cluster. Residues 218–235 (EAAVKVAKAGYPLGFIVA) constitute a DNA-binding region (H-T-H motif).

It belongs to the radical SAM superfamily. SPL family. As to quaternary structure, monomer or homodimer. The cofactor is [4Fe-4S] cluster. S-adenosyl-L-methionine is required as a cofactor.

The enzyme catalyses (5R)-5,6-dihydro-5-(thymidin-7-yl)thymidine in DNA = a thymidine dimer in DNA. Involved in repair of UV radiation-induced DNA damage during spore germination. Can repair thymine dimer 5-thyminyl-5,6-dihydrothymine (known as spore photoproduct (SP)) by in situ monomerization of SP to two thymines. The sequence is that of Spore photoproduct lyase (splB) from Bacillus subtilis (strain 168).